A 969-amino-acid chain; its full sequence is Translation initiation factor IF-2 (969 aa).

Over residues 49-63 (HLRKSHGATDGDKRK) the composition is skewed to basic and acidic residues. Disordered regions lie at residues 49–85 (HLRK…KART), 100–128 (DDVS…REEE), and 143–380 (LRER…SFQA). A compositionally biased stretch (low complexity) spans 105 to 114 (VAEQGQAQVA). Positions 143 to 181 (LRERQERLEREEAERRAREEAAEAERRRAEEEAAAKRAA) are enriched in basic and acidic residues. Residues 182–206 (AEAAAAQQAAQQAAAAQQAAAPADS) show a composition bias toward low complexity. Basic and acidic residues predominate over residues 209 to 260 (DEARAAAERAAQREAAKKAEDAAREAAEKARAEQEEIRKRREAAEAEARAIR). A compositionally biased stretch (low complexity) spans 301 to 323 (AQARPAAKKPAAAPAATPAPAGA). Gly residues predominate over residues 353 to 366 (SSGGVDRGWRGGPK). The region spanning 469-638 (PRPPVVTVMG…LLQAEVLELK (170 aa)) is the tr-type G domain. The tract at residues 478 to 485 (GHVDHGKT) is G1. Residue 478-485 (GHVDHGKT) coordinates GTP. Residues 503-507 (GITQH) form a G2 region. A G3 region spans residues 524–527 (DTPG). GTP is bound by residues 524-528 (DTPGH) and 578-581 (NKID). The tract at residues 578–581 (NKID) is G4. Residues 614–616 (SAK) are G5.

The protein belongs to the TRAFAC class translation factor GTPase superfamily. Classic translation factor GTPase family. IF-2 subfamily.

It is found in the cytoplasm. In terms of biological role, one of the essential components for the initiation of protein synthesis. Protects formylmethionyl-tRNA from spontaneous hydrolysis and promotes its binding to the 30S ribosomal subunits. Also involved in the hydrolysis of GTP during the formation of the 70S ribosomal complex. This is Translation initiation factor IF-2 from Burkholderia multivorans (strain ATCC 17616 / 249).